Here is a 631-residue protein sequence, read N- to C-terminus: MGKKHKKYRPEWRAVEGDYEDKPLEKPLKLVLKVGGSEVTELSGSGHDSSYYDDRSDHEWERHKEKKKKKKKKSEKEKYADDDERRRRKEEKKKKREREQSETASTAPVEPFTLPKPVEVVVEEKKRKRDKFESESEADEFHPAVKVEVEQPADRPVRACRTQQENEATPHQQLLEHFLRLLQRKDAHGFFAFPVTDAIAPGYSMIIKHPMDFSTMKDKIAANEYKTITEFKADFKLMCDNAMVYNRPETVYYKAAKKLLHTGFKMMSKQAAILGDDDIAPEEPVTEMMPIHTEYPKKSKKQPVKEPIISDMYELEGNACSLTDSTAEEHVLALVEHAADEARDRINRFMPNSKIGYLKKDTEGSLMYVVVNQDPEGEEEETHPVDLSSLANKLIPGLTSLGFKDDRRHKVTFLSSAYNTQTLQNNSIYPDLHPEEMDMLYSAYGDETGVQCALSLQEFVKGCGGFTKRLVDDLLDKMTAGDHSKAVVQIRQKRNLPIDEAKSSLCDMPGTDGGGMEAGSVLDFMSMKSYPDMSLDMLNTLGKCVKKEPEHEDGHQHFDDPTKLLQEFQDASVDRVGSRPSSNLSSLSNASERDQHHLGSSPHLGVGDQAEMVQDPYEFLQSPEPGSTANS.

Disordered stretches follow at residues 1-26 (MGKK…PLEK) and 39-116 (VTEL…TLPK). Basic and acidic residues-rich tracts occupy residues 9–26 (RPEW…PLEK) and 50–63 (SYYD…WERH). Residues 64 to 73 (KEKKKKKKKK) are compositionally biased toward basic residues. Over residues 74–85 (SEKEKYADDDER) the composition is skewed to basic and acidic residues. Residues 86–96 (RRRKEEKKKKR) show a composition bias toward basic residues. The Bromo domain occupies 166–270 (NEATPHQQLL…HTGFKMMSKQ (105 aa)). Positions 244–246 (VYN) are histone H4K5ac H4K8ac and histone H4K5bu H4K8bu binding. A disordered region spans residues 571–631 (ASVDRVGSRP…SPEPGSTANS (61 aa)). Residues 581-590 (SSNLSSLSNA) are compositionally biased toward low complexity.

As to quaternary structure, binds acetylated histones H3 and H4. Binds butyrylated histone H4.

Its subcellular location is the nucleus. Its function is as follows. Plays a role in chromatin remodeling and regulation of transcription. Acts as a chromatin reader that recognizes and binds acylated histones: binds histones that are acetylated and/or butyrylated. The chain is Bromodomain-containing protein 9 (brd9) from Danio rerio (Zebrafish).